A 340-amino-acid chain; its full sequence is 4-amino-5-hydroxymethyl-2-methylpyrimidine phosphate synthase THI5 (340 aa).

Lys62 carries the N6-(pyridoxal phosphate)lysine modification. His66 is an active-site residue. 115–118 (GEFG) is a binding site for pyridoxal 5'-phosphate. A CCCFC; essential for catalytic activity, may be the site of iron coordination motif is present at residues 195–199 (CCCFC).

This sequence belongs to the NMT1/THI5 family. Homodimer. It depends on Fe cation as a cofactor.

The catalysed reaction is N(6)-(pyridoxal phosphate)-L-lysyl-[4-amino-5-hydroxymethyl-2-methylpyrimidine phosphate synthase] + L-histidyl-[4-amino-5-hydroxymethyl-2-methylpyrimidine phosphate synthase] + 2 Fe(3+) + 4 H2O = L-lysyl-[4-amino-5-hydroxymethyl-2-methylpyrimidine phosphate synthase] + (2S)-2-amino-5-hydroxy-4-oxopentanoyl-[4-amino-5-hydroxymethyl-2-methylpyrimidine phosphate synthase] + 4-amino-2-methyl-5-(phosphooxymethyl)pyrimidine + 3-oxopropanoate + 2 Fe(2+) + 2 H(+). Its pathway is cofactor biosynthesis; thiamine diphosphate biosynthesis. Responsible for the formation of the pyrimidine heterocycle in the thiamine biosynthesis pathway. Catalyzes the formation of hydroxymethylpyrimidine phosphate (HMP-P) from histidine and pyridoxal phosphate (PLP). The protein uses PLP and the active site histidine to form HMP-P, generating an inactive enzyme. The enzyme can only undergo a single turnover, which suggests it is a suicide enzyme. The polypeptide is 4-amino-5-hydroxymethyl-2-methylpyrimidine phosphate synthase THI5 (Saccharomyces cerevisiae (strain ATCC 204508 / S288c) (Baker's yeast)).